Here is a 279-residue protein sequence, read N- to C-terminus: Large ribosomal subunit protein uL3 (279 aa).

Gln151 carries the N5-methylglutamine modification.

This sequence belongs to the universal ribosomal protein uL3 family. Part of the 50S ribosomal subunit. Forms a cluster with proteins L14 and L19. In terms of processing, methylated by PrmB.

One of the primary rRNA binding proteins, it binds directly near the 3'-end of the 23S rRNA, where it nucleates assembly of the 50S subunit. The polypeptide is Large ribosomal subunit protein uL3 (Dinoroseobacter shibae (strain DSM 16493 / NCIMB 14021 / DFL 12)).